We begin with the raw amino-acid sequence, 396 residues long: Non-homologous end joining protein Ku (396 aa).

Positions 9 to 189 (ISFGLVSIPV…DVAVRPQELS (181 aa)) constitute a Ku domain. Low complexity predominate over residues 278–288 (DGDAGPAAAGV). The tract at residues 278 to 396 (DGDAGPAAAG…SKTPPTRRSA (119 aa)) is disordered. Positions 294–312 (DDKASDDKASDDKASDGRR) are enriched in basic and acidic residues. Residues 315-336 (RTSSVKGASSAPGTRSTARKTP) are compositionally biased toward polar residues. The segment covering 337–396 (SSTRSTAKTNAATKTPPAKTSAAKASAAKTSAAKATSSRTAPKTAPRTPTSKTPPTRRSA) has biased composition (low complexity).

This sequence belongs to the prokaryotic Ku family. As to quaternary structure, homodimer. Interacts with LigD.

In terms of biological role, with LigD forms a non-homologous end joining (NHEJ) DNA repair enzyme, which repairs dsDNA breaks with reduced fidelity. Binds linear dsDNA with 5'- and 3'- overhangs but not closed circular dsDNA nor ssDNA. Recruits and stimulates the ligase activity of LigD. The protein is Non-homologous end joining protein Ku of Frankia casuarinae (strain DSM 45818 / CECT 9043 / HFP020203 / CcI3).